A 122-amino-acid polypeptide reads, in one-letter code: Large ribosomal subunit protein uL14 (122 aa).

It belongs to the universal ribosomal protein uL14 family. In terms of assembly, part of the 50S ribosomal subunit. Forms a cluster with proteins L3 and L19. In the 70S ribosome, L14 and L19 interact and together make contacts with the 16S rRNA in bridges B5 and B8.

In terms of biological role, binds to 23S rRNA. Forms part of two intersubunit bridges in the 70S ribosome. This is Large ribosomal subunit protein uL14 from Maridesulfovibrio salexigens (strain ATCC 14822 / DSM 2638 / NCIMB 8403 / VKM B-1763) (Desulfovibrio salexigens).